An 81-amino-acid chain; its full sequence is Small ribosomal subunit protein bS18 (81 aa).

It belongs to the bacterial ribosomal protein bS18 family. In terms of assembly, part of the 30S ribosomal subunit. Forms a tight heterodimer with protein bS6.

Functionally, binds as a heterodimer with protein bS6 to the central domain of the 16S rRNA, where it helps stabilize the platform of the 30S subunit. This Parvibaculum lavamentivorans (strain DS-1 / DSM 13023 / NCIMB 13966) protein is Small ribosomal subunit protein bS18.